Reading from the N-terminus, the 442-residue chain is Protein translocase subunit SecF (442 aa).

A disordered region spans residues 1–39 (MASKAKTGRDDEATSAVELTEATESAVARTDGDSTTDTA). 6 helical membrane-spanning segments follow: residues 67–87 (WFGV…FRGF), 187–207 (ITKK…LYIT), 218–238 (AITA…LVGF), 243–263 (ATVI…VIVF), 301–321 (LIGV…LGVG), and 331–351 (LIGI…LLVT). Residues 366–442 (VLKRRNSGSP…PTGKRNAGRR (77 aa)) form a disordered region. The segment covering 402–432 (QASSQSAPRAAQGSSKPAPGARPVRPVGTRR) has biased composition (low complexity). Residues 433–442 (PTGKRNAGRR) are compositionally biased toward basic residues.

Belongs to the SecD/SecF family. SecF subfamily. Forms a complex with SecD. Part of the essential Sec protein translocation apparatus which comprises SecA, SecYEG and auxiliary proteins SecDF. Other proteins may also be involved.

It is found in the cell membrane. Part of the Sec protein translocase complex. Interacts with the SecYEG preprotein conducting channel. SecDF uses the proton motive force (PMF) to complete protein translocation after the ATP-dependent function of SecA. In Mycobacterium tuberculosis (strain CDC 1551 / Oshkosh), this protein is Protein translocase subunit SecF.